We begin with the raw amino-acid sequence, 1294 residues long: von Willebrand factor A domain-containing protein 3B (1294 aa).

A VWFA domain is found at 508 to 684 (CIYILIDTSH…EDLTLLVKEM (177 aa)). Disordered stretches follow at residues 732–754 (CAKP…KGPW), 778–803 (RSQM…SSRR), 1012–1036 (APGE…DPLK), and 1193–1247 (DTQD…PRTA). Residues 738 to 748 (DVDSTQTSSLN) are compositionally biased toward polar residues. Positions 778–787 (RSQMSSLRSS) are enriched in low complexity. Basic and acidic residues predominate over residues 1193 to 1202 (DTQDSREPRR). Basic residues predominate over residues 1203–1212 (EKPRRKKRPA). Positions 1213–1236 (KQPLQQAAPSDSDGSSHGISSHGS) are enriched in low complexity.

The protein localises to the cytoplasm. In Homo sapiens (Human), this protein is von Willebrand factor A domain-containing protein 3B (VWA3B).